The sequence spans 265 residues: Cyclin-B2-5 (265 aa).

The protein belongs to the cyclin family. Cyclin AB subfamily.

The protein is Cyclin-B2-5 (CYCB2-5) of Arabidopsis thaliana (Mouse-ear cress).